The primary structure comprises 307 residues: Protoheme IX farnesyltransferase (307 aa).

A run of 9 helical transmembrane segments spans residues Val-31–His-51, Pro-52–Ile-72, Ala-102–Leu-119, Leu-123–Lys-145, Asn-151–Ser-171, Val-179–Phe-199, Ile-225–Ser-245, Phe-247–Leu-267, and Phe-281–Ile-301.

This sequence belongs to the UbiA prenyltransferase family. Protoheme IX farnesyltransferase subfamily.

The protein resides in the cell inner membrane. The catalysed reaction is heme b + (2E,6E)-farnesyl diphosphate + H2O = Fe(II)-heme o + diphosphate. The protein operates within porphyrin-containing compound metabolism; heme O biosynthesis; heme O from protoheme: step 1/1. Functionally, converts heme B (protoheme IX) to heme O by substitution of the vinyl group on carbon 2 of heme B porphyrin ring with a hydroxyethyl farnesyl side group. This is Protoheme IX farnesyltransferase from Rickettsia canadensis (strain McKiel).